A 216-amino-acid polypeptide reads, in one-letter code: UPF0502 protein VC0395_0676/VC395_A0574 (216 aa).

Belongs to the UPF0502 family.

This chain is UPF0502 protein VC0395_0676/VC395_A0574, found in Vibrio cholerae serotype O1 (strain ATCC 39541 / Classical Ogawa 395 / O395).